The primary structure comprises 211 residues: Formate dehydrogenase, cytochrome b556(fdo) subunit (211 aa).

The Cytoplasmic segment spans residues 1–17 (MKRRDTIVRYTAPERIN). His-18 lines the heme b pocket. The chain crosses the membrane as a helical span at residues 18–32 (HWITAFCFILAAVSG). The Periplasmic portion of the chain corresponds to 33 to 53 (LGFLFPSFNWLMQIMGTPQLA). A helical transmembrane segment spans residues 54–72 (RILHPFVGVVMFASFIIMF). His-57 provides a ligand contact to heme b. Residues 73 to 112 (FRYWHHNLINRDDIFWAKNIRKIVVNEEVGDTGRYNFGQK) lie on the Cytoplasmic side of the membrane. The chain crosses the membrane as a helical span at residues 113-130 (CVFWAAIIFLVLLLVSGV). At 131–151 (IIWRPYFAPAFSIPVIRFALM) the chain is on the periplasmic side. The helical transmembrane segment at 152–170 (LHSFAAVALIVVIMVHIYA) threads the bilayer. Heme b contacts are provided by His-153 and His-167. At 171-211 (ALWVKGTITAMVEGWVTSAWAKKHHPRWYREVRKTTEKKAE) the chain is on the cytoplasmic side.

The protein belongs to the formate dehydrogenase gamma subunit family. Formate dehydrogenase is a membrane-bound complex, formed by subunits alpha, beta and gamma. Heme serves as cofactor.

The protein resides in the cell inner membrane. In terms of biological role, allows to use formate as major electron donor during aerobic respiration. Subunit gamma is probably the cytochrome b556(FDO) component of the formate dehydrogenase. The protein is Formate dehydrogenase, cytochrome b556(fdo) subunit (fdoI) of Escherichia coli O157:H7.